We begin with the raw amino-acid sequence, 902 residues long: Probable polyribonucleotide nucleotidyltransferase 1, chloroplastic (902 aa).

Residues M1–R66 constitute a chloroplast transit peptide. Low complexity predominate over residues V44–R53. The segment at V44–K93 is disordered. Positions E80–S91 are enriched in polar residues. Residues P693–I753 enclose the KH domain. Residues G763 to R832 enclose the S1 motif domain. The disordered stretch occupies residues A833 to E902. The span at N839–G850 shows a compositional bias: polar residues. Positions T852–L862 are enriched in basic and acidic residues. The span at E877 to S888 shows a compositional bias: low complexity.

The protein belongs to the polyribonucleotide nucleotidyltransferase family.

It is found in the plastid. Its subcellular location is the chloroplast. The enzyme catalyses RNA(n+1) + phosphate = RNA(n) + a ribonucleoside 5'-diphosphate. Functionally, involved in the metabolism of all major classes of plastid RNAs. Required for efficient 3'-end processing of mRNAs and 3'-end maturation of rRNA transcripts, but is not sufficient to mediate their degradation. Mediates tRNA degradation. May function as a poly(A) mRNA 3'-5' degrading phosphorylase. This Oryza sativa subsp. japonica (Rice) protein is Probable polyribonucleotide nucleotidyltransferase 1, chloroplastic (PNP1).